The sequence spans 388 residues: Probable protein phosphatase 2C 43 (388 aa).

The region spanning Glu-53–Ile-352 is the PPM-type phosphatase domain. Mn(2+) is bound by residues Asp-84, Gly-85, Asp-284, and Asp-343.

It belongs to the PP2C family. Requires Mg(2+) as cofactor. It depends on Mn(2+) as a cofactor.

It catalyses the reaction O-phospho-L-seryl-[protein] + H2O = L-seryl-[protein] + phosphate. The catalysed reaction is O-phospho-L-threonyl-[protein] + H2O = L-threonyl-[protein] + phosphate. The chain is Probable protein phosphatase 2C 43 from Oryza sativa subsp. japonica (Rice).